The primary structure comprises 211 residues: Probable GTP-binding protein EngB (211 aa).

The 185-residue stretch at L21–E205 folds into the EngB-type G domain. GTP is bound by residues G29–S36, G54–K58, D71–G74, N151–D154, and I184–A186. The Mg(2+) site is built by S36 and T56.

It belongs to the TRAFAC class TrmE-Era-EngA-EngB-Septin-like GTPase superfamily. EngB GTPase family. It depends on Mg(2+) as a cofactor.

In terms of biological role, necessary for normal cell division and for the maintenance of normal septation. The sequence is that of Probable GTP-binding protein EngB from Pyrococcus abyssi (strain GE5 / Orsay).